The sequence spans 388 residues: UPF0229 protein BH1031 (388 aa).

The segment at 80-117 (HVGQGDGDSQVGDVIARDPSAGQQGPGKGQGAGDQPGE) is disordered. Over residues 103-113 (QGPGKGQGAGD) the composition is skewed to gly residues.

Belongs to the UPF0229 family.

This chain is UPF0229 protein BH1031, found in Halalkalibacterium halodurans (strain ATCC BAA-125 / DSM 18197 / FERM 7344 / JCM 9153 / C-125) (Bacillus halodurans).